An 874-amino-acid chain; its full sequence is MKILKTQTLRGPNYWSIRRQKLIQMRLDLEDVAEKPSNLIPGFYEGLVKILPSLVEHFCSRDHRGGFLERVQEGTYMGHIVEHIALELQELAGMPVGFGRTRETSTPGIYNVVFEYVYEEAGRYAGRVAVRLCNSIITTGAYGLDELAQDLSDLKDLRANSALGPSTETIIKEAEARQIPWMLLSARAMVQLGYGANQQRIQATLSNKTGILGVELACDKEGTKTTLAEAGIPVPRGTVIYYADELADAIADVGGYPIVLKPLDGNHGRGITIDINSQQEAEEAYDLASAASKTRSVIVERYYKGNDHRVLVINGKLVAVSERIPAHVTGNGSSTIEELIQETNEHPDRGDGHDNVLTRISIDRTSLGVLKRQGFEMDTVLKKGEVAYLRATANLSTGGIAIDRTDEIHPQNIWIAERVAKIIGLDIAGIDVVTPDITKPLTEVDGVIVEVNAAPGFRMHVAPSQGLPRNVAAPVIDMLFPDNHPSRIPILAVTGTNGKTTTTRLLAHIYRQTGKVVGYTSTDGIYLGDYMVEKGDNTGPVSAGVILRDPTVEVAVLECARGGILRSGLAFESCDVGVVLNVAEDHLGLGDIDTIEQMAKVKGVIAESVNADGYAVLNADDPLVAQMAKNVKGKIAYFSMSKDNPIIIDHLRRNGMAAVYENGYLSIFEGEWTLRIEKAENIPVTMKAMAPFMIANALAASLAAFVHGIDIELIRQGVRSFNPGANQTPGRMNLFDMKDFSVLIDYAHNPAGYLAVGSFVKNWKGDRLGVIGGPGDRRDEDLMLLGKIASQIFDHIIIKEDDDNRGRDRGTVADLIAKGIVAENPNASYDDILDETEAIETGLKKVDKGGLVVIFPESVTGSIEMIEKYHLSSE.

The region spanning 224–480 is the ATP-grasp domain; sequence KTTLAEAGIP…VAAPVIDMLF (257 aa). 495-501 lines the ATP pocket; the sequence is GTNGKTT.

It in the C-terminal section; belongs to the MurCDEF family. Homodimer.

The catalysed reaction is [L-4-(L-arginin-2-N-yl)aspartate](n) + L-aspartate + ATP = [L-4-(L-arginin-2-N-yl)aspartate](n)-L-aspartate + ADP + phosphate + H(+). It catalyses the reaction [L-4-(L-arginin-2-N-yl)aspartate](n)-L-aspartate + L-arginine + ATP = [L-4-(L-arginin-2-N-yl)aspartate](n+1) + ADP + phosphate + H(+). Its function is as follows. Catalyzes the ATP-dependent polymerization of arginine and aspartate to multi-L-arginyl-poly-L-aspartic acid (cyanophycin; a water-insoluble reserve polymer). This chain is Cyanophycin synthetase (cphA), found in Geminocystis herdmanii (strain PCC 6308) (Synechocystis sp. (strain PCC 6308)).